Here is a 421-residue protein sequence, read N- to C-terminus: Diaminobutyrate--2-oxoglutarate transaminase (421 aa).

An N6-(pyridoxal phosphate)lysine modification is found at lysine 262.

It belongs to the class-III pyridoxal-phosphate-dependent aminotransferase family. It depends on pyridoxal 5'-phosphate as a cofactor.

It catalyses the reaction L-2,4-diaminobutanoate + 2-oxoglutarate = L-aspartate 4-semialdehyde + L-glutamate. It functions in the pathway amine and polyamine biosynthesis; ectoine biosynthesis; L-ectoine from L-aspartate 4-semialdehyde: step 1/3. Catalyzes reversively the conversion of L-aspartate beta-semialdehyde (ASA) to L-2,4-diaminobutyrate (DABA) by transamination with L-glutamate. This is Diaminobutyrate--2-oxoglutarate transaminase (ectB) from Vibrio parahaemolyticus serotype O3:K6 (strain RIMD 2210633).